The following is a 209-amino-acid chain: MTYETNTPTEESIIPKHEDGEEYNSIYLSRFEKDISISQTLDFSQFMQTQILLTAKRKALELGDDRSPINNDPYNIRRSDFDELSEYTASKSPSIISEASHNSPSRELDDSGDENTSKLTGTKQSMLKARNRQAAQKCRIKKKKYLQTLQDQVNYYTSENKELLQSANDLREEIIKLRTLVFAHRDCPVSKACSKALFLMGKEKPLTPP.

The span at Ser-90 to Ser-103 shows a compositional bias: polar residues. Residues Ser-90–Gln-133 are disordered. One can recognise a bZIP domain in the interval Gly-121–His-184. Positions Lys-123–Lys-161 are basic motif. Residues Leu-163–Leu-177 form a leucine-zipper region.

Belongs to the bZIP family.

The protein localises to the nucleus. The protein is Transcription factor atf31 (atf31) of Schizosaccharomyces pombe (strain 972 / ATCC 24843) (Fission yeast).